A 1217-amino-acid chain; its full sequence is Disease resistance protein RPS4 (1217 aa).

In terms of domain architecture, TIR spans 14-175 (PQHQVFINFR…EIVKAVKTAL (162 aa)). The active site involves glutamate 88. One can recognise an NB-ARC domain in the interval 211–472 (EQRLKDLEEK…FRSQDKDYVE (262 aa)). 11 LRR repeats span residues 260–285 (HALI…LLGE), 436–459 (PNIV…AFLD), 614–636 (LKEV…DFNP), 637–659 (INLV…DKDT), 682–706 (AEKL…MKKM), 708–728 (MLAF…EMNL), 729–749 (ISLK…PLIS), 750–774 (DNIE…KLQR), 796–818 (LKAL…EIDI), 819–842 (SFLN…SVQY), and 861–887 (LSQL…NLQC). Residues 1162–1195 (TEGVDGRVKKKKKTRMDNGRPKKKQRSGRDDNQT) are disordered. A Nuclear localization signal motif is present at residues 1170–1177 (KKKKKTRM).

As to quaternary structure, interacts with EDS1.

It localises to the nucleus. The enzyme catalyses NAD(+) + H2O = ADP-D-ribose + nicotinamide + H(+). Its function is as follows. Disease resistance (R) protein that specifically recognizes the AvrRps4 type III effector avirulence protein from Pseudomonas syringae. Resistance proteins guard the plant against pathogens that contain an appropriate avirulence protein via an indirect interaction with this avirulence protein. That triggers a defense system including the hypersensitive response, which restricts the pathogen growth. The combined presence of both regular and alternative RPS4 transcripts with truncated open reading frames (ORFs) is necessary for function. RPS4 function is regulated at multiple levels, including gene expression, alternative splicing, and protein stability. Acts as a disease resistance protein involved in resistance to fungal and bacterial pathogens, including R.solanacearum, P.syringae pv. tomato and C.higginsianum. In presence of RRS1, elicites an EDS1-dependent hypersensitive response. This chain is Disease resistance protein RPS4, found in Arabidopsis thaliana (Mouse-ear cress).